The chain runs to 817 residues: Actin filament-associated protein 1-like 2 (817 aa).

Phosphotyrosine is present on Tyr56. Residues 63 to 164 (HKQQNAESQD…KGKSAPHQWP (102 aa)) are disordered. The segment covering 123–139 (YYEEAEPYDTSLNEDGE) has biased composition (acidic residues). PH domains follow at residues 175-271 (DARI…EVSG) and 353-447 (SLET…SESG). A Phosphoserine modification is found at Ser408. Residue Tyr413 is modified to Phosphotyrosine. At Ser484 the chain carries Phosphoserine. A compositionally biased stretch (low complexity) spans 512–528 (TTAGEAPEEATPATDAP). Disordered stretches follow at residues 512–657 (TTAG…KLGK) and 754–786 (GTTV…VNSA). A coiled-coil region spans residues 652-748 (EIKLGKNRTE…VKDSLRKAEA (97 aa)). Residues 754-763 (GTTVDTTHLE) are compositionally biased toward polar residues. Over residues 767 to 782 (PRPKAATPTPAPDCTP) the composition is skewed to low complexity.

In terms of assembly, interacts with SRC. Interacts with LCK when tyrosine phosphorylated. Tyrosine phosphorylated (by SRC).

Its subcellular location is the cytoplasm. Functionally, may play a role in a signaling cascade by enhancing the kinase activity of SRC. Contributes to SRC-regulated transcription activation. In Bos taurus (Bovine), this protein is Actin filament-associated protein 1-like 2 (AFAP1L2).